Here is a 67-residue protein sequence, read N- to C-terminus: Large ribosomal subunit protein uL29c (67 aa).

The protein belongs to the universal ribosomal protein uL29 family.

The protein resides in the plastid. It localises to the chloroplast. The chain is Large ribosomal subunit protein uL29c (rpl29) from Porphyra purpurea (Red seaweed).